A 736-amino-acid polypeptide reads, in one-letter code: Probable beta-glucosidase L (736 aa).

The first 21 residues, 1–21 (MNYRVPSLKATALAMAALTQA), serve as a signal peptide directing secretion. N-linked (GlcNAc...) asparagine glycosylation occurs at asparagine 224. Residue aspartate 252 is part of the active site. 4 N-linked (GlcNAc...) asparagine glycosylation sites follow: asparagine 295, asparagine 363, asparagine 429, and asparagine 607.

Belongs to the glycosyl hydrolase 3 family.

Its subcellular location is the secreted. The enzyme catalyses Hydrolysis of terminal, non-reducing beta-D-glucosyl residues with release of beta-D-glucose.. The protein operates within glycan metabolism; cellulose degradation. Beta-glucosidases are one of a number of cellulolytic enzymes involved in the degradation of cellulosic biomass. Catalyzes the last step releasing glucose from the inhibitory cellobiose. The polypeptide is Probable beta-glucosidase L (bglL) (Aspergillus terreus (strain NIH 2624 / FGSC A1156)).